The chain runs to 324 residues: Olfactory receptor 4K15 (324 aa).

Over 1 to 25 (MNETNHSRVTEFVLLGLSSSRELQP) the chain is Extracellular. 2 N-linked (GlcNAc...) asparagine glycosylation sites follow: asparagine 2 and asparagine 5. Residues 26-49 (FLFLTFSLLYLAILLGNFLIILTV) form a helical membrane-spanning segment. Topologically, residues 50 to 57 (TSDSRLHT) are cytoplasmic. A helical transmembrane segment spans residues 58–79 (PMYFLLANLSFIDVCVASFATP). Topologically, residues 80–100 (KMIADFLVERKTISFDACLAQ) are extracellular. Cysteine 97 and cysteine 189 are joined by a disulfide. A helical membrane pass occupies residues 101–120 (IFFVHLFTGSEMVLLVSMAY). Residues 121-139 (DRYVAICKPLHYMTVMSRR) lie on the Cytoplasmic side of the membrane. A helical transmembrane segment spans residues 140 to 158 (VCVVLVLISWFVGFIHTTS). Residues 159–195 (QLAFTVNLPFCGPNKVDSFFCDLPLVTKLACIDTYVV) lie on the Extracellular side of the membrane. A helical transmembrane segment spans residues 196-219 (SLLIVADSGFLSLSSFLLLVVSYT). Topologically, residues 220–235 (VILVTVRNRSSASMAK) are cytoplasmic. A helical membrane pass occupies residues 236-258 (ARSTLTAHITVVTLFFGPCIFIY). The Extracellular portion of the chain corresponds to 259–269 (VWPFSSYSVDK). The helical transmembrane segment at 270 to 289 (VLAVFYTIFTLILNPVIYTL) threads the bilayer. The Cytoplasmic portion of the chain corresponds to 290 to 324 (RNKEVKAAMSKLKSRYLKPSQVSVVIRNVLFLETK).

The protein belongs to the G-protein coupled receptor 1 family.

The protein localises to the cell membrane. Odorant receptor. The polypeptide is Olfactory receptor 4K15 (OR4K15) (Homo sapiens (Human)).